Reading from the N-terminus, the 636-residue chain is DNA mismatch repair protein MutL (636 aa).

The interval 362–393 (RKTPEVHEEAEKPEFLVKQEAKNSEEPKNETE) is disordered. Residues 363 to 393 (KTPEVHEEAEKPEFLVKQEAKNSEEPKNETE) show a composition bias toward basic and acidic residues.

The protein belongs to the DNA mismatch repair MutL/HexB family.

In terms of biological role, this protein is involved in the repair of mismatches in DNA. It is required for dam-dependent methyl-directed DNA mismatch repair. May act as a 'molecular matchmaker', a protein that promotes the formation of a stable complex between two or more DNA-binding proteins in an ATP-dependent manner without itself being part of a final effector complex. The chain is DNA mismatch repair protein MutL from Lactobacillus helveticus (strain DPC 4571).